The following is a 365-amino-acid chain: MTAAAESERLRPPRVRAVRIWLTVVAALIAVMVLVGGATRLTESGLSIVEWKPVTGTLPPLTDAQWHAAFEGYKTIPQYRELNAGMTLYEFKTIFWWEWSHRLLGRVIGIAYLLPFLWFLWRGAIGPQWKRALWGIFALGALQGAVGWWMVASGLSQRTEVSQVRLAVHLTLALIIYAAIVWTLRRLADKPPIPAAARLKVTAIALLALTLLQLFLGALVAGLRAGRVFNTWPLIDGALIPSAERLWFEQPWWKNLFDNHLTVQFDHRMMAYALWALAAWHAIDAVRSRAGGAASGALWLFAALSLQAVLGILTVLHATPIGLALAHQAVGIVVLTLAVLQVERLTAPRLKALPRAMPVPVGQPG.

A run of 8 helical transmembrane segments spans residues 17–37, 107–127, 132–152, 164–184, 203–223, 264–283, 296–316, and 320–340; these read AVRIWLTVVAALIAVMVLVGG, VIGIAYLLPFLWFLWRGAIGP, ALWGIFALGALQGAVGWWMVA, VRLAVHLTLALIIYAAIVWTL, AIALLALTLLQLFLGALVAGL, QFDHRMMAYALWALAAWHAI, GALWLFAALSLQAVLGILTVL, and PIGLALAHQAVGIVVLTLAVL. His-267 provides a ligand contact to heme. A heme-binding site is contributed by His-327.

Belongs to the COX15/CtaA family. Type 2 subfamily. As to quaternary structure, interacts with CtaB. Requires heme b as cofactor.

It localises to the cell membrane. The enzyme catalyses Fe(II)-heme o + 2 A + H2O = Fe(II)-heme a + 2 AH2. Its pathway is porphyrin-containing compound metabolism; heme A biosynthesis; heme A from heme O: step 1/1. Its function is as follows. Catalyzes the conversion of heme O to heme A by two successive hydroxylations of the methyl group at C8. The first hydroxylation forms heme I, the second hydroxylation results in an unstable dihydroxymethyl group, which spontaneously dehydrates, resulting in the formyl group of heme A. In Rhodopseudomonas palustris (strain HaA2), this protein is Heme A synthase.